The sequence spans 356 residues: UDP-N-acetylglucosamine--N-acetylmuramyl-(pentapeptide) pyrophosphoryl-undecaprenol N-acetylglucosamine transferase (356 aa).

Residues 12-14 (TGG), Asn-124, Arg-163, Ser-188, Ile-242, and Gln-287 each bind UDP-N-acetyl-alpha-D-glucosamine.

This sequence belongs to the glycosyltransferase 28 family. MurG subfamily.

The protein localises to the cell inner membrane. It catalyses the reaction di-trans,octa-cis-undecaprenyl diphospho-N-acetyl-alpha-D-muramoyl-L-alanyl-D-glutamyl-meso-2,6-diaminopimeloyl-D-alanyl-D-alanine + UDP-N-acetyl-alpha-D-glucosamine = di-trans,octa-cis-undecaprenyl diphospho-[N-acetyl-alpha-D-glucosaminyl-(1-&gt;4)]-N-acetyl-alpha-D-muramoyl-L-alanyl-D-glutamyl-meso-2,6-diaminopimeloyl-D-alanyl-D-alanine + UDP + H(+). It functions in the pathway cell wall biogenesis; peptidoglycan biosynthesis. In terms of biological role, cell wall formation. Catalyzes the transfer of a GlcNAc subunit on undecaprenyl-pyrophosphoryl-MurNAc-pentapeptide (lipid intermediate I) to form undecaprenyl-pyrophosphoryl-MurNAc-(pentapeptide)GlcNAc (lipid intermediate II). The polypeptide is UDP-N-acetylglucosamine--N-acetylmuramyl-(pentapeptide) pyrophosphoryl-undecaprenol N-acetylglucosamine transferase (Pseudomonas savastanoi pv. phaseolicola (strain 1448A / Race 6) (Pseudomonas syringae pv. phaseolicola (strain 1448A / Race 6))).